A 926-amino-acid chain; its full sequence is Bifunctional uridylyltransferase/uridylyl-removing enzyme (926 aa).

The uridylyltransferase stretch occupies residues 1–379 (MPVSFLSLAS…PKSRRSGASK (379 aa)). The segment at 380-736 (QIDGFPVIQG…GHEMPAYDAT (357 aa)) is uridylyl-removing. The HD domain maps to 496-618 (VDEHAIRALD…VKSPERLRLL (123 aa)). ACT domains follow at residues 737-814 (MISL…IRSS) and 849-926 (VIEV…ISEK).

It belongs to the GlnD family. The cofactor is Mg(2+).

The enzyme catalyses [protein-PII]-L-tyrosine + UTP = [protein-PII]-uridylyl-L-tyrosine + diphosphate. It catalyses the reaction [protein-PII]-uridylyl-L-tyrosine + H2O = [protein-PII]-L-tyrosine + UMP + H(+). Uridylyltransferase (UTase) activity is inhibited by glutamine, while glutamine activates uridylyl-removing (UR) activity. Modifies, by uridylylation and deuridylylation, the PII regulatory proteins (GlnB and homologs), in response to the nitrogen status of the cell that GlnD senses through the glutamine level. Under low glutamine levels, catalyzes the conversion of the PII proteins and UTP to PII-UMP and PPi, while under higher glutamine levels, GlnD hydrolyzes PII-UMP to PII and UMP (deuridylylation). Thus, controls uridylylation state and activity of the PII proteins, and plays an important role in the regulation of nitrogen assimilation and metabolism. In Zymomonas mobilis subsp. mobilis (strain ATCC 31821 / ZM4 / CP4), this protein is Bifunctional uridylyltransferase/uridylyl-removing enzyme.